A 448-amino-acid chain; its full sequence is Probable sodium-coupled neutral amino acid transporter 6 (448 aa).

Polar residues-rich tracts occupy residues 1–12 and 26–36; these read MQASDSSINTLD and LLANSPQRRSS. Residues 1–36 form a disordered region; it reads MQASDSSINTLDGHQVSAGRDESTPLLANSPQRRSS. Helical transmembrane passes span 40–60, 69–89, 117–137, 164–184, and 185–205; these read SFGFAVFNLMNAIMGSGILGL, ILGFSALLLIVALLAAYSIHL, LVACTILIQNVGAMSSYLFII, LLIITSVCIVLPLALLPKIGF, and LGYTSSLSFFFMVYFAVVIVI. An intrachain disulfide couples Cys212 to Cys232. N-linked (GlcNAc...) asparagine glycans are attached at residues Asn218 and Asn228. 6 consecutive transmembrane segments (helical) span residues 244–264, 281–301, 321–341, 365–385, 388–408, and 425–445; these read AFALPTMAFSFLCHTSVLPIY, VGIALSFLIYYISALFGYLTF, VLIITVRLCILLAVLLTVPLI, ILVTLVLNIIIVLLAIYVPDM, VFGVVGSTTSTCLLFVFPGLF, and ACGLLVLGICIGACSLTLIIM.

The protein belongs to the amino acid/polyamine transporter 2 family.

It localises to the cell membrane. In terms of biological role, probable sodium-dependent amino acid/proton antiporter, could be a neuronal transporter for glutamate. The protein is Probable sodium-coupled neutral amino acid transporter 6 (slc38a6) of Xenopus tropicalis (Western clawed frog).